The primary structure comprises 392 residues: L-rhamnonate dehydratase (392 aa).

Positions 22 and 48 each coordinate substrate. Asp-214, Glu-240, and Glu-268 together coordinate Mg(2+). The active-site Proton acceptor is the His-318. Glu-338 contributes to the substrate binding site.

The protein belongs to the mandelate racemase/muconate lactonizing enzyme family. RhamD subfamily. In terms of assembly, homooctamer; tetramer of dimers. Requires Mg(2+) as cofactor.

The enzyme catalyses L-rhamnonate = 2-dehydro-3-deoxy-L-rhamnonate + H2O. Functionally, catalyzes the dehydration of L-rhamnonate to 2-keto-3-deoxy-L-rhamnonate (KDR). The chain is L-rhamnonate dehydratase from Burkholderia orbicola (strain MC0-3).